The chain runs to 414 residues: Serine--tRNA ligase (414 aa).

230–232 (TSE) is a binding site for L-serine. Residue 261 to 263 (RQE) coordinates ATP. E284 lines the L-serine pocket. 348–351 (EISS) lines the ATP pocket. S382 provides a ligand contact to L-serine.

Belongs to the class-II aminoacyl-tRNA synthetase family. Type-1 seryl-tRNA synthetase subfamily. In terms of assembly, homodimer. The tRNA molecule binds across the dimer.

The protein localises to the cytoplasm. The catalysed reaction is tRNA(Ser) + L-serine + ATP = L-seryl-tRNA(Ser) + AMP + diphosphate + H(+). The enzyme catalyses tRNA(Sec) + L-serine + ATP = L-seryl-tRNA(Sec) + AMP + diphosphate + H(+). It functions in the pathway aminoacyl-tRNA biosynthesis; selenocysteinyl-tRNA(Sec) biosynthesis; L-seryl-tRNA(Sec) from L-serine and tRNA(Sec): step 1/1. Functionally, catalyzes the attachment of serine to tRNA(Ser). Is also able to aminoacylate tRNA(Sec) with serine, to form the misacylated tRNA L-seryl-tRNA(Sec), which will be further converted into selenocysteinyl-tRNA(Sec). The chain is Serine--tRNA ligase from Campylobacter concisus (strain 13826).